A 131-amino-acid chain; its full sequence is MSWQTYVDEHLMCEIEGHHLASAAILGHDGTVWAQSADFPQFKPEEITGIMKDFDEPGHLAPTGMFVAGAKYMVIQGEPGRVIRGKKGAGGITIKKTGQALVVGIYDEPMTPGQCNMVVERLGDYLVEQGM.

Cysteine 13 and cysteine 115 are oxidised to a cystine. The Involved in PIP2 interaction motif lies at 81 to 97 (RVIRGKKGAGGITIKKT). Threonine 111 carries the phosphothreonine modification.

This sequence belongs to the profilin family. As to quaternary structure, occurs in many kinds of cells as a complex with monomeric actin in a 1:1 ratio.

The protein resides in the cytoplasm. It is found in the cytoskeleton. Its function is as follows. Binds to actin and affects the structure of the cytoskeleton. At high concentrations, profilin prevents the polymerization of actin, whereas it enhances it at low concentrations. By binding to PIP2, it inhibits the formation of IP3 and DG. The chain is Profilin-1 (PRO1) from Phleum pratense (Common timothy).